The primary structure comprises 510 residues: Glycerol kinase (510 aa).

Threonine 13 provides a ligand contact to ADP. 2 residues coordinate ATP: threonine 13 and threonine 14. A sn-glycerol 3-phosphate-binding site is contributed by threonine 13. Position 17 (arginine 17) interacts with ADP. Positions 83, 84, 135, and 255 each coordinate sn-glycerol 3-phosphate. Glycerol is bound by residues arginine 83, glutamate 84, tyrosine 135, aspartate 255, and glutamine 256. Residues threonine 277, glycine 321, glycine 421, and asparagine 425 each coordinate ADP. ATP is bound by residues threonine 277, glycine 321, and glycine 421.

This sequence belongs to the FGGY kinase family.

It carries out the reaction glycerol + ATP = sn-glycerol 3-phosphate + ADP + H(+). Its pathway is polyol metabolism; glycerol degradation via glycerol kinase pathway; sn-glycerol 3-phosphate from glycerol: step 1/1. Key enzyme in the regulation of glycerol uptake and metabolism. Catalyzes the phosphorylation of glycerol to yield sn-glycerol 3-phosphate. This is Glycerol kinase from Haloquadratum walsbyi (strain DSM 16790 / HBSQ001).